Reading from the N-terminus, the 258-residue chain is Small ribosomal subunit protein uS2 (258 aa).

The disordered stretch occupies residues 234–258 (ETANAEEAMQKAAAVEAAAEAAPAQ). The segment covering 236–258 (ANAEEAMQKAAAVEAAAEAAPAQ) has biased composition (low complexity).

It belongs to the universal ribosomal protein uS2 family.

This Desulfovibrio desulfuricans (strain ATCC 27774 / DSM 6949 / MB) protein is Small ribosomal subunit protein uS2.